Consider the following 520-residue polypeptide: Transactivator/viroplasmin protein (520 aa).

Residues 487-520 (KDASADSGPKDGPPPTRSIVEKEDVPTTSSKQVD) are disordered.

Belongs to the caulimoviridae viroplasmin family.

Its subcellular location is the host cytoplasm. Enhances the ribosomal termination-reinitiation event leading to the translation of major open reading frames on the polycistronic viral RNAs. This is Transactivator/viroplasmin protein from Arabidopsis thaliana (Mouse-ear cress).